Here is a 264-residue protein sequence, read N- to C-terminus: MKKIMMIGYGAMAREVLSRLPDGVSVGWILARAAHHAAIDSAFGGQVQALTHPDQCTEQPDLVLECASQQAVAEFGEAVVTRGWPLAVISTGALADAALQQRLQQACRQHQGQLIVLSGAVAGMDGLASAREGGLDSVTYQACKSPASWRGSMAEQLIDLDAVSEAQVFFEGSAREAARLFPANANVAATIALNGLGMDATRVRLLVDPATRRNTHRLQVCGNFGEFQIELSGNPLASNPKTSTLAALSAVQACRRLVDGGFIA.

NAD(+) contacts are provided by A120 and N186. H216 is an active-site residue.

This sequence belongs to the L-aspartate dehydrogenase family.

The catalysed reaction is L-aspartate + NADP(+) + H2O = oxaloacetate + NH4(+) + NADPH + H(+). It catalyses the reaction L-aspartate + NAD(+) + H2O = oxaloacetate + NH4(+) + NADH + H(+). It participates in cofactor biosynthesis; NAD(+) biosynthesis; iminoaspartate from L-aspartate (dehydrogenase route): step 1/1. In terms of biological role, specifically catalyzes the NAD or NADP-dependent dehydrogenation of L-aspartate to iminoaspartate. This Serratia proteamaculans (strain 568) protein is L-aspartate dehydrogenase.